Reading from the N-terminus, the 397-residue chain is Elongation factor Tu (397 aa).

Positions 10–206 (KPHVNIGTIG…AVDSYIPTPE (197 aa)) constitute a tr-type G domain. The tract at residues 19–26 (GHVDHGKT) is G1. GTP is bound at residue 19–26 (GHVDHGKT). Thr-26 is a Mg(2+) binding site. Residues 60-64 (GITIN) form a G2 region. The interval 81–84 (DCPG) is G3. Residues 81–85 (DCPGH) and 136–139 (NKAD) each bind GTP. Positions 136-139 (NKAD) are G4. Residues 174 to 176 (SAL) are G5.

It belongs to the TRAFAC class translation factor GTPase superfamily. Classic translation factor GTPase family. EF-Tu/EF-1A subfamily. In terms of assembly, monomer.

Its subcellular location is the cytoplasm. It catalyses the reaction GTP + H2O = GDP + phosphate + H(+). In terms of biological role, GTP hydrolase that promotes the GTP-dependent binding of aminoacyl-tRNA to the A-site of ribosomes during protein biosynthesis. The sequence is that of Elongation factor Tu from Clostridium perfringens (strain ATCC 13124 / DSM 756 / JCM 1290 / NCIMB 6125 / NCTC 8237 / Type A).